The sequence spans 398 residues: Inositol polyphosphate 5-phosphatase (398 aa).

This sequence belongs to the inositol 1,4,5-trisphosphate 5-phosphatase type II family. Expressed in tail, cilia, dendrites, axon and male head.

Its subcellular location is the cytoplasm. Its function is as follows. Dephosphorylates a number of phosphatidylinositols. Controls the cellular levels and subcellular distribution of phosphatidylinositol 3,5-bisphosphate and phosphatidylinositol 3,4,5-trisphosphate. Has a role in sperm activation and motility. Influences the localization of the transient receptor potential polycystin (TRPP) complex proteins lov-1 and pkd-2. The protein is Inositol polyphosphate 5-phosphatase of Caenorhabditis elegans.